The sequence spans 523 residues: Alanine aminotransferase 2 (523 aa).

Positions 1–25 are disordered; it reads MQRAAALVRRGCGPRTPSSWGRSQS. Pyridoxal 5'-phosphate-binding residues include Ala-187, Ser-188, Tyr-216, Asn-271, and Ser-338. N6-(pyridoxal phosphate)lysine is present on Lys-341. Arg-350 is a pyridoxal 5'-phosphate binding site. Lys-415, Lys-505, and Lys-512 each carry N6-acetyllysine.

This sequence belongs to the class-I pyridoxal-phosphate-dependent aminotransferase family. Alanine aminotransferase subfamily. In terms of assembly, homodimer. The cofactor is pyridoxal 5'-phosphate. In terms of tissue distribution, expressed at high levels in muscle, adipose tissue, kidney and brain and at lower levels in the liver and breast.

It carries out the reaction L-alanine + 2-oxoglutarate = pyruvate + L-glutamate. It participates in amino-acid degradation; L-alanine degradation via transaminase pathway; pyruvate from L-alanine: step 1/1. Its function is as follows. Catalyzes the reversible transamination between alanine and 2-oxoglutarate to form pyruvate and glutamate. The polypeptide is Alanine aminotransferase 2 (GPT2) (Homo sapiens (Human)).